The sequence spans 375 residues: Succinyl-diaminopimelate desuccinylase (375 aa).

Residue His66 coordinates Zn(2+). Asp68 is a catalytic residue. Position 99 (Asp99) interacts with Zn(2+). The active-site Proton acceptor is Glu133. Zn(2+)-binding residues include Glu134, Glu162, and His348.

This sequence belongs to the peptidase M20A family. DapE subfamily. In terms of assembly, homodimer. Zn(2+) is required as a cofactor. It depends on Co(2+) as a cofactor.

The enzyme catalyses N-succinyl-(2S,6S)-2,6-diaminopimelate + H2O = (2S,6S)-2,6-diaminopimelate + succinate. Its pathway is amino-acid biosynthesis; L-lysine biosynthesis via DAP pathway; LL-2,6-diaminopimelate from (S)-tetrahydrodipicolinate (succinylase route): step 3/3. Catalyzes the hydrolysis of N-succinyl-L,L-diaminopimelic acid (SDAP), forming succinate and LL-2,6-diaminopimelate (DAP), an intermediate involved in the bacterial biosynthesis of lysine and meso-diaminopimelic acid, an essential component of bacterial cell walls. The protein is Succinyl-diaminopimelate desuccinylase of Klebsiella pneumoniae subsp. pneumoniae (strain ATCC 700721 / MGH 78578).